A 172-amino-acid chain; its full sequence is Ribosome maturation factor RimM (172 aa).

The PRC barrel domain maps to 95–168 (AEGEFYYHQI…RVDVEIMEGL (74 aa)).

It belongs to the RimM family. In terms of assembly, binds ribosomal protein uS19.

It localises to the cytoplasm. An accessory protein needed during the final step in the assembly of 30S ribosomal subunit, possibly for assembly of the head region. Essential for efficient processing of 16S rRNA. May be needed both before and after RbfA during the maturation of 16S rRNA. It has affinity for free ribosomal 30S subunits but not for 70S ribosomes. In Streptococcus equi subsp. zooepidemicus (strain H70), this protein is Ribosome maturation factor RimM.